A 139-amino-acid polypeptide reads, in one-letter code: Large-conductance mechanosensitive channel (139 aa).

3 helical membrane passes run 14–34 (VVDL…VNSA), 38–58 (IFMP…YYIP), and 82–102 (GQFL…FLVI).

This sequence belongs to the MscL family. Homopentamer.

It localises to the cell inner membrane. Its function is as follows. Channel that opens in response to stretch forces in the membrane lipid bilayer. May participate in the regulation of osmotic pressure changes within the cell. This chain is Large-conductance mechanosensitive channel, found in Methylobacterium radiotolerans (strain ATCC 27329 / DSM 1819 / JCM 2831 / NBRC 15690 / NCIMB 10815 / 0-1).